Here is a 191-residue protein sequence, read N- to C-terminus: MGVTNPDKVISNTPGVVDPATSVPAWQDDAFFRQATDQLADKGFVLTTVDDLINWSRTGSLMWMTFGLACCAVEMMQTSMPRYDAERFGVAPRASPRQSDVMIVAGTLTNKMAPALRKVYDQMPEPRYVISMGSCANGGGYYHYSYSVVRGCDRIVPVDIYVPGCPPTAEALLYGILALQKKIRRTGTLDR.

4 residues coordinate [4Fe-4S] cluster: C70, C71, C135, and C165.

The protein belongs to the complex I 20 kDa subunit family. As to quaternary structure, NDH-1 is composed of 14 different subunits. Subunits NuoB, C, D, E, F, and G constitute the peripheral sector of the complex. Requires [4Fe-4S] cluster as cofactor.

The protein localises to the cell inner membrane. The enzyme catalyses a quinone + NADH + 5 H(+)(in) = a quinol + NAD(+) + 4 H(+)(out). Functionally, NDH-1 shuttles electrons from NADH, via FMN and iron-sulfur (Fe-S) centers, to quinones in the respiratory chain. The immediate electron acceptor for the enzyme in this species is believed to be ubiquinone. Couples the redox reaction to proton translocation (for every two electrons transferred, four hydrogen ions are translocated across the cytoplasmic membrane), and thus conserves the redox energy in a proton gradient. In Parvibaculum lavamentivorans (strain DS-1 / DSM 13023 / NCIMB 13966), this protein is NADH-quinone oxidoreductase subunit B.